The primary structure comprises 271 residues: MYNYFYQGHLVRKCLGQHFLHDQNIIESIVAVIHPLPSQALVEIGPGLGALTKYVAKYVKTITVIELDHNLVAYLANHPILQHKLNILSQDVMKVNFSDLAKKLSQPLRIFGNLPYNISIALMFNLFRHIHMIRDMHFMLQKEVVSRLLAKPNNKNYGKLSVIAQHYCQIDLVLDVPPESFRPVPQVDSAVVRLVPYVIPPYPVKDINKLYLLTSLAFQQRRKTIRNSLRNLFSVEQLLTQGIISTLRAENLSVEQYCCLASTLAECLPKK.

S-adenosyl-L-methionine-binding residues include His18, Leu20, Gly45, Glu66, Asp91, and Asn113.

It belongs to the class I-like SAM-binding methyltransferase superfamily. rRNA adenine N(6)-methyltransferase family. RsmA subfamily.

Its subcellular location is the cytoplasm. It catalyses the reaction adenosine(1518)/adenosine(1519) in 16S rRNA + 4 S-adenosyl-L-methionine = N(6)-dimethyladenosine(1518)/N(6)-dimethyladenosine(1519) in 16S rRNA + 4 S-adenosyl-L-homocysteine + 4 H(+). In terms of biological role, specifically dimethylates two adjacent adenosines (A1518 and A1519) in the loop of a conserved hairpin near the 3'-end of 16S rRNA in the 30S particle. May play a critical role in biogenesis of 30S subunits. This is Ribosomal RNA small subunit methyltransferase A from Baumannia cicadellinicola subsp. Homalodisca coagulata.